Consider the following 346-residue polypeptide: Structure-specific endonuclease subunit SLX1 (346 aa).

The 84-residue stretch at 22–105 (DFYGVYLLRS…QHPYQTRHIK (84 aa)) folds into the GIY-YIG domain. The segment at 216 to 306 (CFICNETIDY…TPLQGKCLSC (91 aa)) adopts an SLX1-type zinc-finger fold.

This sequence belongs to the SLX1 family. As to quaternary structure, forms a heterodimer with SLX4. A divalent metal cation is required as a cofactor.

The protein localises to the nucleus. In terms of biological role, catalytic subunit of the SLX1-SLX4 structure-specific endonuclease that resolves DNA secondary structures generated during DNA repair and recombination. Has endonuclease activity towards branched DNA substrates, introducing single-strand cuts in duplex DNA close to junctions with ss-DNA. The sequence is that of Structure-specific endonuclease subunit SLX1 from Debaryomyces hansenii (strain ATCC 36239 / CBS 767 / BCRC 21394 / JCM 1990 / NBRC 0083 / IGC 2968) (Yeast).